Here is a 491-residue protein sequence, read N- to C-terminus: Lysine--tRNA ligase (491 aa).

The Mg(2+) site is built by E400 and E407.

Belongs to the class-II aminoacyl-tRNA synthetase family. Homodimer. The cofactor is Mg(2+).

It is found in the cytoplasm. It catalyses the reaction tRNA(Lys) + L-lysine + ATP = L-lysyl-tRNA(Lys) + AMP + diphosphate. In Mesomycoplasma hyopneumoniae (strain 7448) (Mycoplasma hyopneumoniae), this protein is Lysine--tRNA ligase.